The primary structure comprises 335 residues: Ubiquinone biosynthesis protein COQ4, mitochondrial (335 aa).

Residues 1-10 constitute a mitochondrion transit peptide; the sequence is MLRLSLLRST. Zn(2+) is bound by residues H210, D211, H214, and E226.

The protein belongs to the COQ4 family. Component of a multi-subunit COQ enzyme complex, composed of at least COQ3, COQ4, COQ5, COQ6, COQ7 and COQ9. Interacts with COQ3. Zn(2+) serves as cofactor.

The protein localises to the mitochondrion inner membrane. The catalysed reaction is 4-hydroxy-3-methoxy-5-(all-trans-hexaprenyl)benzoate + H(+) = 2-methoxy-6-(all-trans-hexaprenyl)phenol + CO2. Its pathway is cofactor biosynthesis; ubiquinone biosynthesis. Lyase that catalyzes the C1-decarboxylation of 4-hydroxy-3-methoxy-5-(all-trans-hexaprenyl)benzoic acid into 2-methoxy-6-(all-trans-hexaprenyl)phenol during ubiquinone biosynthesis. May play a role in organizing a multi-subunit COQ enzyme complex required for coenzyme Q biosynthesis. Required for steady-state levels of COQ3, COQ4, COQ6, COQ7 and COQ9 polypeptides. The polypeptide is Ubiquinone biosynthesis protein COQ4, mitochondrial (Saccharomyces cerevisiae (strain ATCC 204508 / S288c) (Baker's yeast)).